We begin with the raw amino-acid sequence, 701 residues long: MFNIHTKSVQFGEKTITLETGRVARQANGAVMVTYGDTVVLVTAVAETSMRAGQDFFPLSVHYQEKFWAAGKIPGGFIKRETRPSEREVLTSRLIDRPIRPLFPKGFMNETQVVAQVLSYDPDYPSDIAALIGCSAALALSGVPFEGPIGGARVGFIDGKPVLNPTVDQLAASRLDLVVAGTRSAVTMVESEVDFLSEDEMLDCVMFAHESFQPVITAIEELVAEAGKPRWVVEPVQVNEALLAEMNDKFAAQVTEAYAIPEKMARYEAVAQVKAAAMEALGTIEVDGQSVKRSEEVASLFKKIESRTLRQNVLQGKRVDGRGLTDIRPIACEVSILPRVHGTALFTRGETQAIATVTLGTSRDEQIVETLSGEYRDRFYLNYTFPPYCVGETGRMGAPGRREIGHGKLATRALTAIVPSAEVFPYTLRITSEITESNGSSSMATVCGAVLAMQDAGVPIKAPVAGIAMGLVKEGDAYAVLSDILGDEDHLGDMDFKVAGNADGITALQMDIKITGITREIMAKALEQARAGRLHILGEMGKAMTTHRAEMSAYAPRIHTMKIHPDKIREVIGSGGKVIRSITEETGCAIDIEDDGTIRIASSDQASAEQAVKIIKSIVAEVEKGQVYEGKVVRITDFGAFVNILPNKDGLVHISQLANRRVQNVTDVVKEGDVVTVKVLDVDRQGRVKLTMKEMEEGAAE.

Mg(2+) contacts are provided by D489 and D495. The KH domain maps to 556-615 (PRIHTMKIHPDKIREVIGSGGKVIRSITEETGCAIDIEDDGTIRIASSDQASAEQAVKII). The 69-residue stretch at 625-693 (GQVYEGKVVR…RQGRVKLTMK (69 aa)) folds into the S1 motif domain.

This sequence belongs to the polyribonucleotide nucleotidyltransferase family. Requires Mg(2+) as cofactor.

It is found in the cytoplasm. It catalyses the reaction RNA(n+1) + phosphate = RNA(n) + a ribonucleoside 5'-diphosphate. In terms of biological role, involved in mRNA degradation. Catalyzes the phosphorolysis of single-stranded polyribonucleotides processively in the 3'- to 5'-direction. This chain is Polyribonucleotide nucleotidyltransferase, found in Magnetococcus marinus (strain ATCC BAA-1437 / JCM 17883 / MC-1).